Here is a 229-residue protein sequence, read N- to C-terminus: Cytochrome c oxidase subunit 2 (229 aa).

At Met1 to Tyr26 the chain is on the mitochondrial intermembrane side. A helical membrane pass occupies residues Thr27–Ser48. The Mitochondrial matrix portion of the chain corresponds to Ser49–Glu62. A helical transmembrane segment spans residues Thr63–Gln82. At Leu83–Glu229 the chain is on the mitochondrial intermembrane side. His161, Cys196, Glu198, Cys200, His204, and Met207 together coordinate Cu cation. Residue Glu198 participates in Mg(2+) binding.

The protein belongs to the cytochrome c oxidase subunit 2 family. Component of the cytochrome c oxidase (complex IV, CIV), a multisubunit enzyme composed of a catalytic core of 3 subunits and several supernumerary subunits. The complex exists as a monomer or a dimer and forms supercomplexes (SCs) in the inner mitochondrial membrane with ubiquinol-cytochrome c oxidoreductase (cytochrome b-c1 complex, complex III, CIII). Requires Cu cation as cofactor.

It localises to the mitochondrion inner membrane. The catalysed reaction is 4 Fe(II)-[cytochrome c] + O2 + 8 H(+)(in) = 4 Fe(III)-[cytochrome c] + 2 H2O + 4 H(+)(out). In terms of biological role, component of the cytochrome c oxidase, the last enzyme in the mitochondrial electron transport chain which drives oxidative phosphorylation. The respiratory chain contains 3 multisubunit complexes succinate dehydrogenase (complex II, CII), ubiquinol-cytochrome c oxidoreductase (cytochrome b-c1 complex, complex III, CIII) and cytochrome c oxidase (complex IV, CIV), that cooperate to transfer electrons derived from NADH and succinate to molecular oxygen, creating an electrochemical gradient over the inner membrane that drives transmembrane transport and the ATP synthase. Cytochrome c oxidase is the component of the respiratory chain that catalyzes the reduction of oxygen to water. Electrons originating from reduced cytochrome c in the intermembrane space (IMS) are transferred via the dinuclear copper A center (CU(A)) of subunit 2 and heme A of subunit 1 to the active site in subunit 1, a binuclear center (BNC) formed by heme A3 and copper B (CU(B)). The BNC reduces molecular oxygen to 2 water molecules using 4 electrons from cytochrome c in the IMS and 4 protons from the mitochondrial matrix. The sequence is that of Cytochrome c oxidase subunit 2 (COII) from Pisaster ochraceus (Ochre sea star).